Here is a 310-residue protein sequence, read N- to C-terminus: AMMECR1-like protein (310 aa).

The interval 26–95 is disordered; that stretch reads LSGSGTHSHG…LSPLPRPNGT (70 aa). Over residues 28–66 the composition is skewed to polar residues; it reads GSGTHSHGNQSTTVPGSSSGPLQNHQHVDSSSGRENVSD. Ser-74 carries the phosphoserine modification. Residues 97–291 form the AMMECR1 domain; the sequence is NTTKNLVVTA…ISYAEYIASR (195 aa).

This Homo sapiens (Human) protein is AMMECR1-like protein (AMMECR1L).